Consider the following 479-residue polypeptide: Putative F-box/LRR-repeat protein At1g56400 (479 aa).

The 49-residue stretch at 12–60 folds into the F-box domain; that stretch reads QDRLSNLPDVLLIMIISCLSFKECIRTSVLAKRWRYLCRETRNISFKET. LRR repeat units lie at residues 99–129, 139–167, 186–211, 228–254, 287–312, 342–367, and 419–446; these read YFSIPSDFLAAVESLIEFAVSRQVKNLVLDF, CASRYDYVCVQLPVCVYSLTTLESLKIYS, IGWIKLTDVESLLLNSPTLKSLSINY, VFESCDFSSFMVCCFDLPNVEIFKYSG, RTKLEGSVLSAFLNNLRGARTLSVCP, LHVMEFKGIKLLLDNCPNLETLTFDI, and LKFLIQSGRGRWPGREHGPMLERVELYM.

This Arabidopsis thaliana (Mouse-ear cress) protein is Putative F-box/LRR-repeat protein At1g56400.